The chain runs to 543 residues: MMDSSSKSLTQYIPSPMGSLSRLKQKGVDNFQKVKKSGKSIYNYNYSKFVPHPFSTIDESVKHSESGRYDDLEIIRPTKEKEVTSSVYKRNSGKSLNTESQFSLGDSDAATLVNSVATFKLNNASTSTSLVSSSSTVCSQAKSSLRSPTSRLNDTKIKEENNYISSVKDYCGPMRKSMVKTEILIEEPLNPTTDIKSFINSYNHGKAYSLGETQHLHYYQLPFPWRENRYIIHGYRFYNTHSKSLLSIFNWYGWHNETSNIWSHLLGAIYIIYLAIYDFPQSEVWRNSQVPPQARWIVFMFLAAALKCMLSSVFWHTFNGTSFLKLRSKFACVDYSGITILITASILTTEFVTMYSCYWAMYTYMSISLALGVFGVFMNWSPRFDRPEARPLRIRFFILLATMGVLSFLHLIFLTDLHYAATLFSPVTYKSVVWYLVGVVFYGSFIPERFRSDVQVDKTIPTNYELSTDLEIITKQREIHFREVPTAHSKCSSCPSHAKSFKSLWWVDYFGCSHTFWHFFVVLGVIGHYRAILDMFAKRWILS.

At 1 to 259 (MMDSSSKSLT…NWYGWHNETS (259 aa)) the chain is on the lumenal side. N-linked (GlcNAc...) asparagine glycosylation is found at asparagine 45, asparagine 123, asparagine 153, and asparagine 256. A helical transmembrane segment spans residues 260–280 (NIWSHLLGAIYIIYLAIYDFP). Over 281–295 (QSEVWRNSQVPPQAR) the chain is Cytoplasmic. Residues 296 to 316 (WIVFMFLAAALKCMLSSVFWH) traverse the membrane as a helical segment. Residues 317 to 330 (TFNGTSFLKLRSKF) lie on the Lumenal side of the membrane. N-linked (GlcNAc...) asparagine glycosylation occurs at asparagine 319. A helical transmembrane segment spans residues 331 to 353 (ACVDYSGITILITASILTTEFVT). Residues 354-357 (MYSC) are Cytoplasmic-facing. The chain crosses the membrane as a helical span at residues 358–378 (YWAMYTYMSISLALGVFGVFM). At 379–395 (NWSPRFDRPEARPLRIR) the chain is on the lumenal side. The chain crosses the membrane as a helical span at residues 396-416 (FFILLATMGVLSFLHLIFLTD). The Cytoplasmic segment spans residues 417 to 425 (LHYAATLFS). Residues 426–446 (PVTYKSVVWYLVGVVFYGSFI) traverse the membrane as a helical segment. Over 447–505 (PERFRSDVQVDKTIPTNYELSTDLEIITKQREIHFREVPTAHSKCSSCPSHAKSFKSLW) the chain is Lumenal. A helical transmembrane segment spans residues 506–526 (WVDYFGCSHTFWHFFVVLGVI). Over 527-543 (GHYRAILDMFAKRWILS) the chain is Cytoplasmic.

The protein belongs to the ADIPOR family.

The protein resides in the endoplasmic reticulum membrane. Its function is as follows. ADIPOR-like receptor involved in zinc metabolism either by altering membrane sterol content or by directly altering cellular zinc levels. This Saccharomyces cerevisiae (strain ATCC 204508 / S288c) (Baker's yeast) protein is ADIPOR-like receptor IZH3 (IZH3).